The chain runs to 313 residues: MMENFKHTTVLLDEAVNGLNIRPDGIYIDGTFGRGGHSRLILSQLGEEGRLLAIDRDPQAIAVAQTINDPRFSIIHGPFSALADYVAERELTGKIDGILLDLGVSSPQLDDAERGFSFMRDGPLDMRMDPTRGQSAAEWLQTAEEADIAWVLKTFGEERFAKRIARAIVERNREQPMTRTKELAEVVAAATPVKDKFKHPATRTFQAVRIWVNSELEEIEQALKSSLSVLAPGGRLSIISFHSLEDRIVKRFMREQSRGPQVPAGLPMTEAQLKKLGGRELRALGKLMPGEKEVAENPRARSSVLRIAERTNA.

S-adenosyl-L-methionine is bound by residues 35–37, aspartate 55, phenylalanine 79, aspartate 101, and glutamine 108; that span reads GGH.

The protein belongs to the methyltransferase superfamily. RsmH family.

The protein localises to the cytoplasm. The catalysed reaction is cytidine(1402) in 16S rRNA + S-adenosyl-L-methionine = N(4)-methylcytidine(1402) in 16S rRNA + S-adenosyl-L-homocysteine + H(+). Functionally, specifically methylates the N4 position of cytidine in position 1402 (C1402) of 16S rRNA. The sequence is that of Ribosomal RNA small subunit methyltransferase H from Salmonella agona (strain SL483).